We begin with the raw amino-acid sequence, 980 residues long: Phosphoenolpyruvate carboxylase (980 aa).

Catalysis depends on residues His182 and Lys625.

The protein belongs to the PEPCase type 1 family. The cofactor is Mg(2+).

The catalysed reaction is oxaloacetate + phosphate = phosphoenolpyruvate + hydrogencarbonate. Functionally, forms oxaloacetate, a four-carbon dicarboxylic acid source for the tricarboxylic acid cycle. The chain is Phosphoenolpyruvate carboxylase from Bordetella pertussis (strain Tohama I / ATCC BAA-589 / NCTC 13251).